We begin with the raw amino-acid sequence, 138 residues long: ATP synthase epsilon chain (138 aa).

This sequence belongs to the ATPase epsilon chain family. In terms of assembly, F-type ATPases have 2 components, CF(1) - the catalytic core - and CF(0) - the membrane proton channel. CF(1) has five subunits: alpha(3), beta(3), gamma(1), delta(1), epsilon(1). CF(0) has three main subunits: a, b and c.

It localises to the cell inner membrane. Its function is as follows. Produces ATP from ADP in the presence of a proton gradient across the membrane. The sequence is that of ATP synthase epsilon chain from Geobacter metallireducens (strain ATCC 53774 / DSM 7210 / GS-15).